Consider the following 195-residue polypeptide: Recombination protein RecR (195 aa).

The C4-type zinc-finger motif lies at 53 to 68 (CSVCFNIDVKSPCSIC). A Toprim domain is found at 76–171 (QLLCIVEELG…KITRLACGIP (96 aa)).

Belongs to the RecR family.

Functionally, may play a role in DNA repair. It seems to be involved in an RecBC-independent recombinational process of DNA repair. It may act with RecF and RecO. This Ehrlichia canis (strain Jake) protein is Recombination protein RecR.